Reading from the N-terminus, the 525-residue chain is Membrane-bound lytic murein transglycosylase F (525 aa).

Positions 1 to 24 (MQIRHFNRLKRSVLLFASVLLLSA) are cleaved as a signal peptide. Residues 25–284 (CQIESQPKSE…SLEEKYIGHI (260 aa)) are non-LT domain. The tract at residues 286 to 525 (AFDYVDTRAF…VDEDLDQEEE (240 aa)) is LT domain. The active site involves Glu-329. The interval 506 to 525 (VSGASDITNEVDEDLDQEEE) is disordered. The span at 514–525 (NEVDEDLDQEEE) shows a compositional bias: acidic residues.

The protein in the N-terminal section; belongs to the bacterial solute-binding protein 3 family. It in the C-terminal section; belongs to the transglycosylase Slt family.

The protein localises to the cell outer membrane. It catalyses the reaction Exolytic cleavage of the (1-&gt;4)-beta-glycosidic linkage between N-acetylmuramic acid (MurNAc) and N-acetylglucosamine (GlcNAc) residues in peptidoglycan, from either the reducing or the non-reducing ends of the peptidoglycan chains, with concomitant formation of a 1,6-anhydrobond in the MurNAc residue.. Murein-degrading enzyme that degrades murein glycan strands and insoluble, high-molecular weight murein sacculi, with the concomitant formation of a 1,6-anhydromuramoyl product. Lytic transglycosylases (LTs) play an integral role in the metabolism of the peptidoglycan (PG) sacculus. Their lytic action creates space within the PG sacculus to allow for its expansion as well as for the insertion of various structures such as secretion systems and flagella. This Vibrio parahaemolyticus serotype O3:K6 (strain RIMD 2210633) protein is Membrane-bound lytic murein transglycosylase F.